A 486-amino-acid polypeptide reads, in one-letter code: MTHYIQGQWHTGNGHDVTSINPANGETIWCGKTATAEQVNAAVEAARAAQFDWFMLGFDARLAIVEAYRSQLEANKAELAETIAQETGKPQWETATEVGAMIGKIALSAAAYHKRTGTEANDTPAGRAVIRHKPHGVVAVFGPYNFPGHLPNGHIVPALLAGNTVIFKPSELTPKVAELMVTLWDKAGLPAGVINLVQGEVDTGKALASHPQIDGLFFTGSSRTGHLLHQQYAGHPGKILALEMGGNNPLIIKGVQDIKAAVHDILQSAYISSGQRCTCARRLYVEQGEQGDALIALLVDAVKQIKVGPWNAQPQPFMGSMISETAAKGMVAAQANLLDLGGKVLVELTHLQAGTGLVSPGLIDVTAIDVLPDEEYFGPLLQLVRYGDFDQAIKLANQTRYGLSAGLLADSREDYDYFLARIRAGIVNWNKQITGASGAAPFGGVGASGNHRASAFYAADYCAYPVASVEADAVSLPATLSPGLSL.

Residue 220-225 (GSSRTG) coordinates NAD(+). Residues glutamate 243 and cysteine 277 contribute to the active site.

The protein belongs to the aldehyde dehydrogenase family. AstD subfamily.

The enzyme catalyses N-succinyl-L-glutamate 5-semialdehyde + NAD(+) + H2O = N-succinyl-L-glutamate + NADH + 2 H(+). The protein operates within amino-acid degradation; L-arginine degradation via AST pathway; L-glutamate and succinate from L-arginine: step 4/5. Its function is as follows. Catalyzes the NAD-dependent reduction of succinylglutamate semialdehyde into succinylglutamate. The sequence is that of N-succinylglutamate 5-semialdehyde dehydrogenase from Shewanella sp. (strain W3-18-1).